We begin with the raw amino-acid sequence, 223 residues long: UPF0758 protein Cvib_1178 (223 aa).

Residues Lys100–Leu222 enclose the MPN domain. His171, His173, and Asp184 together coordinate Zn(2+). A JAMM motif motif is present at residues His171–Asp184.

Belongs to the UPF0758 family.

This chain is UPF0758 protein Cvib_1178, found in Chlorobium phaeovibrioides (strain DSM 265 / 1930) (Prosthecochloris vibrioformis (strain DSM 265)).